Here is a 285-residue protein sequence, read N- to C-terminus: MEMILITGMSGSGKSVALHALEDAGYYCVDNLPPELLSSFVALKRPHNAPKLAIAMDVRSATSLPLVPEQLRELKAQGMAVQSLFLDANTDTLVRRFSETRRLHPLSRIDATDQHRALVDAIELERNLLGDMREQAHVIDTSMIRAAQLQGYVKSLLQNPSRQLTLVFESFAFKRGVPLDADYVFDVRMLPNPHYEADLRHQTGLDQPVADFLKAHSEVDDMFRHIEQFLSHWLQALVRDHRSYVTVAVGCTGGQHRSVYLVEALAAAFGKDWPTLKRHRELEAG.

Position 8-15 (8-15 (GMSGSGKS)) interacts with ATP. 57 to 60 (DVRS) is a binding site for GTP.

The protein belongs to the RapZ-like family.

Displays ATPase and GTPase activities. The protein is Nucleotide-binding protein Pnap_0906 of Polaromonas naphthalenivorans (strain CJ2).